Consider the following 227-residue polypeptide: tRNA (guanine-N(1)-)-methyltransferase (227 aa).

Residues Gly-107 and 127 to 132 each bind S-adenosyl-L-methionine; that span reads LGDFIL.

It belongs to the RNA methyltransferase TrmD family. Homodimer.

The protein resides in the cytoplasm. The enzyme catalyses guanosine(37) in tRNA + S-adenosyl-L-methionine = N(1)-methylguanosine(37) in tRNA + S-adenosyl-L-homocysteine + H(+). Functionally, specifically methylates guanosine-37 in various tRNAs. This is tRNA (guanine-N(1)-)-methyltransferase from Mesomycoplasma hyopneumoniae (strain 232) (Mycoplasma hyopneumoniae).